Here is a 336-residue protein sequence, read N- to C-terminus: 4-hydroxythreonine-4-phosphate dehydrogenase (336 aa).

Thr140 contacts substrate. The a divalent metal cation site is built by His171, His216, and His271. Lys279, Asn288, and Arg297 together coordinate substrate.

The protein belongs to the PdxA family. As to quaternary structure, homodimer. It depends on Zn(2+) as a cofactor. Mg(2+) is required as a cofactor. The cofactor is Co(2+).

The protein localises to the cytoplasm. It carries out the reaction 4-(phosphooxy)-L-threonine + NAD(+) = 3-amino-2-oxopropyl phosphate + CO2 + NADH. It functions in the pathway cofactor biosynthesis; pyridoxine 5'-phosphate biosynthesis; pyridoxine 5'-phosphate from D-erythrose 4-phosphate: step 4/5. In terms of biological role, catalyzes the NAD(P)-dependent oxidation of 4-(phosphooxy)-L-threonine (HTP) into 2-amino-3-oxo-4-(phosphooxy)butyric acid which spontaneously decarboxylates to form 3-amino-2-oxopropyl phosphate (AHAP). In Erythrobacter litoralis (strain HTCC2594), this protein is 4-hydroxythreonine-4-phosphate dehydrogenase.